We begin with the raw amino-acid sequence, 662 residues long: Polyunsaturated fatty acid (12S)/(13S)-lipoxygenase, epidermal-type (662 aa).

In terms of domain architecture, PLAT spans 2–114; that stretch reads GKYKILVVTG…TIYLPEGTAL (113 aa). One can recognise a Lipoxygenase domain in the interval 114–662; sequence LKVNDDTKNL…PSMVENSVTI (549 aa). Positions 360, 365, 540, 544, and 662 each coordinate Fe cation.

Belongs to the lipoxygenase family. Fe cation is required as a cofactor.

Its subcellular location is the cytoplasm. The enzyme catalyses (5Z,8Z,11Z,14Z)-eicosatetraenoate + O2 = (12S)-hydroperoxy-(5Z,8Z,10E,14Z)-eicosatetraenoate. The catalysed reaction is 1-O-methyl-(9Z,12Z)-octadecadienoate + O2 = 1-O-methyl-(13S)-hydroperoxy-(9Z,11E)-octadecadienoate. It carries out the reaction (8Z,11Z,14Z)-eicosatrienoate + O2 = (12S)-hydroperoxy-(8Z,10E,14Z)-eicosatrienoate. It catalyses the reaction (5Z,8Z,11Z)-eicosatrienoate + O2 = (12S)-hydroperoxy-(5Z,8Z,10E)-eicosatrienoate. The enzyme catalyses 1-O-methyl-(5Z,8Z,11Z,14Z)-eicosatetraenoate + O2 = 1-O-methyl-(12S)-hydroperoxy-(5Z,8Z,10E,14Z)-eicosatetraenoate. The catalysed reaction is (9Z,12Z)-octadecadienoate + O2 = (13S)-hydroperoxy-(9Z,11E)-octadecadienoate. It carries out the reaction (4Z,7Z,10Z,13Z,16Z,19Z)-docosahexaenoate + O2 = (14S)-hydroperoxy-(4Z,7Z,10Z,12E,16Z,19Z)-docosahexaenoate. It functions in the pathway lipid metabolism; hydroperoxy eicosatetraenoic acid biosynthesis. With respect to regulation, arachidonate 12-lipoxygenase activity is decreased when the pH decreases from 7.4 to 6.0. In terms of biological role, catalyzes the regio and stereo-specific incorporation of a single molecule of dioxygen into free and esterified polyunsaturated fatty acids generating lipid hydroperoxides that can be further reduced to the corresponding hydroxy species. Shows increasing catalytic activity within the series arachidonic acid &lt; 5,8,11-eicosatrienoic acid &lt; linoleic acid &lt; 8,11,14-eicosatrienoic acid. The protein is Polyunsaturated fatty acid (12S)/(13S)-lipoxygenase, epidermal-type of Rattus norvegicus (Rat).